A 249-amino-acid polypeptide reads, in one-letter code: uncharacterized protein (249 aa).

A signal peptide spans 1–43 (MRRGRSRPAGAAPAALLLPLLLLLPLTGCDRLAAAPAEHAAAA). A disordered region spans residues 40–59 (AAAAGDPAQDADRGRRLPPV). In terms of domain architecture, NodB homology spans 68 to 243 (PVVFLTYDDG…TIEEQGLRVG (176 aa)).

This is an uncharacterized protein from Streptomyces coelicolor (strain ATCC BAA-471 / A3(2) / M145).